Consider the following 62-residue polypeptide: Phylloseptin-Az7 (62 aa).

The signal sequence occupies residues 1–19; the sequence is LKKSLFLVLFLGLVSLSIC. A propeptide spanning residues 20–40 is cleaved from the precursor; that stretch reads EEEKRETEEKENEQEDDKSEE. Phenylalanine 61 is subject to Phenylalanine amide.

It belongs to the frog skin active peptide (FSAP) family. Phylloseptin subfamily. In terms of tissue distribution, expressed by the skin glands.

Its subcellular location is the secreted. Functionally, has antimicrobial activity. The protein is Phylloseptin-Az7 (psn15) of Pithecopus azureus (Orange-legged monkey tree frog).